The following is a 276-amino-acid chain: Large ribosomal subunit protein uL2 (276 aa).

The segment at 223–276 (GAAMNPVDHPHGGGEGRAPRGRPPASPWGWQTKGLKTRKRRKPSSRFIIARRKK) is disordered. Basic and acidic residues predominate over residues 230 to 240 (DHPHGGGEGRA). Residues 257-276 (LKTRKRRKPSSRFIIARRKK) are compositionally biased toward basic residues.

Belongs to the universal ribosomal protein uL2 family. As to quaternary structure, part of the 50S ribosomal subunit. Forms a bridge to the 30S subunit in the 70S ribosome.

In terms of biological role, one of the primary rRNA binding proteins. Required for association of the 30S and 50S subunits to form the 70S ribosome, for tRNA binding and peptide bond formation. It has been suggested to have peptidyltransferase activity; this is somewhat controversial. Makes several contacts with the 16S rRNA in the 70S ribosome. The protein is Large ribosomal subunit protein uL2 of Thermus thermophilus (strain ATCC BAA-163 / DSM 7039 / HB27).